The sequence spans 96 residues: Large ribosomal subunit protein bL27 (96 aa).

The propeptide occupies 1-9 (MLNMNLQLL).

The protein belongs to the bacterial ribosomal protein bL27 family. In terms of processing, the N-terminus is cleaved by ribosomal processing cysteine protease Prp.

The sequence is that of Large ribosomal subunit protein bL27 from Clostridioides difficile (strain 630) (Peptoclostridium difficile).